A 232-amino-acid polypeptide reads, in one-letter code: Octanoyltransferase (232 aa).

One can recognise a BPL/LPL catalytic domain in the interval 44–219; sequence EYTADEIWVV…QLARQFGLVL (176 aa). Substrate is bound by residues 83-90, 150-152, and 163-165; these read RGGQVTYH, ALG, and GLS. Cysteine 181 functions as the Acyl-thioester intermediate in the catalytic mechanism.

It belongs to the LipB family.

The protein localises to the cytoplasm. It carries out the reaction octanoyl-[ACP] + L-lysyl-[protein] = N(6)-octanoyl-L-lysyl-[protein] + holo-[ACP] + H(+). It participates in protein modification; protein lipoylation via endogenous pathway; protein N(6)-(lipoyl)lysine from octanoyl-[acyl-carrier-protein]: step 1/2. Catalyzes the transfer of endogenously produced octanoic acid from octanoyl-acyl-carrier-protein onto the lipoyl domains of lipoate-dependent enzymes. Lipoyl-ACP can also act as a substrate although octanoyl-ACP is likely to be the physiological substrate. This Xanthomonas axonopodis pv. citri (strain 306) protein is Octanoyltransferase.